The following is a 707-amino-acid chain: Ribosomal RNA large subunit methyltransferase K/L (707 aa).

Residues 44-155 (VIYNLCLWSR…NDILTVSFDL (112 aa)) form the THUMP domain.

This sequence belongs to the methyltransferase superfamily. RlmKL family.

It is found in the cytoplasm. The enzyme catalyses guanosine(2445) in 23S rRNA + S-adenosyl-L-methionine = N(2)-methylguanosine(2445) in 23S rRNA + S-adenosyl-L-homocysteine + H(+). The catalysed reaction is guanosine(2069) in 23S rRNA + S-adenosyl-L-methionine = N(2)-methylguanosine(2069) in 23S rRNA + S-adenosyl-L-homocysteine + H(+). Functionally, specifically methylates the guanine in position 2445 (m2G2445) and the guanine in position 2069 (m7G2069) of 23S rRNA. The sequence is that of Ribosomal RNA large subunit methyltransferase K/L from Legionella pneumophila subsp. pneumophila (strain Philadelphia 1 / ATCC 33152 / DSM 7513).